The primary structure comprises 467 residues: MTCRTRFAPSPTGYLHIGGARTALYCWLEARHRGGQFVLRIEDTDRERSTQAAIDAILEAMDWLGLGYDEGPIYQTQRIARYQEVAEQLLAQGKAYYAYETREELDAMREAAMAKQEKPRFNGAAREQNLPYRDDPNRVIRFKNPIGGTVVFEDLIKGCIEIANSELDDMVIFRPDGFPTYNFAVVVDDWDMGITEVIRGDDHINNTPRQINIYEALGAPVPRFAHMPMILDEQGAKLSKRTGAADVMQYKDAGYLPHALINYLARLGWSHGDQELFTRQELLDLFDVKDVNSKAARLDMAKLGWVNQHYLKTDDPASIAPQLEYQLAKLGVDIAAGPAAADVVVALRERVQTLKEMAEKAVVWYQPLETYDEAAVMKHLKLGAEVPLGKARELLAAVDAWSVENVSAALHDAAAALELGMGKIAQPLRVAITGTQVSPDISQTVYLAGREGALKRIDAALIKIGAA.

The 'HIGH' region signature appears at 9–19 (PSPTGYLHIGG). The 'KMSKS' region motif lies at 237–241 (KLSKR). Residue lysine 240 participates in ATP binding.

The protein belongs to the class-I aminoacyl-tRNA synthetase family. Glutamate--tRNA ligase type 1 subfamily. As to quaternary structure, monomer.

The protein resides in the cytoplasm. It carries out the reaction tRNA(Glu) + L-glutamate + ATP = L-glutamyl-tRNA(Glu) + AMP + diphosphate. Functionally, catalyzes the attachment of glutamate to tRNA(Glu) in a two-step reaction: glutamate is first activated by ATP to form Glu-AMP and then transferred to the acceptor end of tRNA(Glu). This Xanthomonas euvesicatoria pv. vesicatoria (strain 85-10) (Xanthomonas campestris pv. vesicatoria) protein is Glutamate--tRNA ligase.